The primary structure comprises 188 residues: GTP cyclohydrolase 1 (188 aa).

Zn(2+) is bound by residues C75, H78, and C146.

It belongs to the GTP cyclohydrolase I family. Toroid-shaped homodecamer, composed of two pentamers of five dimers.

The catalysed reaction is GTP + H2O = 7,8-dihydroneopterin 3'-triphosphate + formate + H(+). It participates in cofactor biosynthesis; 7,8-dihydroneopterin triphosphate biosynthesis; 7,8-dihydroneopterin triphosphate from GTP: step 1/1. The chain is GTP cyclohydrolase 1 from Hahella chejuensis (strain KCTC 2396).